Here is a 91-residue protein sequence, read N- to C-terminus: CRISPR-associated endoribonuclease Cas2 2 (91 aa).

D6 contacts Mg(2+).

This sequence belongs to the CRISPR-associated endoribonuclease Cas2 protein family. In terms of assembly, homodimer, forms a heterotetramer with a Cas1 homodimer. It depends on Mg(2+) as a cofactor.

In terms of biological role, CRISPR (clustered regularly interspaced short palindromic repeat), is an adaptive immune system that provides protection against mobile genetic elements (viruses, transposable elements and conjugative plasmids). CRISPR clusters contain sequences complementary to antecedent mobile elements and target invading nucleic acids. CRISPR clusters are transcribed and processed into CRISPR RNA (crRNA). Functions as a ssRNA-specific endoribonuclease. Involved in the integration of spacer DNA into the CRISPR cassette. The chain is CRISPR-associated endoribonuclease Cas2 2 from Moorella thermoacetica (strain ATCC 39073 / JCM 9320).